A 103-amino-acid polypeptide reads, in one-letter code: MFLTLALLRKGIPGKQWIGKYRRPRPVTWQIKRNVIKRLEQEAENEYWISRPFMTLEQERGHAAQRREWMWQQIKAERQAKFPEHKYIADQLNHLRVTKTWPS.

The protein belongs to the mitochondrion-specific ribosomal protein mL63 family.

The protein resides in the mitochondrion. The polypeptide is Large ribosomal subunit protein mL63 (mrpl57) (Danio rerio (Zebrafish)).